We begin with the raw amino-acid sequence, 329 residues long: Ketol-acid reductoisomerase (NADP(+)) (329 aa).

Residues 2 to 182 enclose the KARI N-terminal Rossmann domain; sequence TQLFYDTDAD…GGTRAGILET (181 aa). Residues 25–28, S51, S53, and 83–86 contribute to the NADP(+) site; these read YGSQ and DEFQ. The active site involves H108. An NADP(+)-binding site is contributed by G134. A KARI C-terminal knotted domain is found at 183–328; the sequence is NFKEETETDL…KGLRSMFSWL (146 aa). The Mg(2+) site is built by D191, E195, E227, and E231. S252 is a binding site for substrate.

Belongs to the ketol-acid reductoisomerase family. Requires Mg(2+) as cofactor.

The enzyme catalyses (2R)-2,3-dihydroxy-3-methylbutanoate + NADP(+) = (2S)-2-acetolactate + NADPH + H(+). It carries out the reaction (2R,3R)-2,3-dihydroxy-3-methylpentanoate + NADP(+) = (S)-2-ethyl-2-hydroxy-3-oxobutanoate + NADPH + H(+). It participates in amino-acid biosynthesis; L-isoleucine biosynthesis; L-isoleucine from 2-oxobutanoate: step 2/4. Its pathway is amino-acid biosynthesis; L-valine biosynthesis; L-valine from pyruvate: step 2/4. Involved in the biosynthesis of branched-chain amino acids (BCAA). Catalyzes an alkyl-migration followed by a ketol-acid reduction of (S)-2-acetolactate (S2AL) to yield (R)-2,3-dihydroxy-isovalerate. In the isomerase reaction, S2AL is rearranged via a Mg-dependent methyl migration to produce 3-hydroxy-3-methyl-2-ketobutyrate (HMKB). In the reductase reaction, this 2-ketoacid undergoes a metal-dependent reduction by NADPH to yield (R)-2,3-dihydroxy-isovalerate. This is Ketol-acid reductoisomerase (NADP(+)) from Prochlorococcus marinus (strain AS9601).